We begin with the raw amino-acid sequence, 337 residues long: GTP 3',8-cyclase (337 aa).

The Radical SAM core domain occupies 17–243; it reads PFQRQYYYLR…HKSHTDGPAK (227 aa). Arg-26 is a binding site for GTP. Cys-33 and Cys-37 together coordinate [4Fe-4S] cluster. Tyr-39 provides a ligand contact to S-adenosyl-L-methionine. Cys-40 contacts [4Fe-4S] cluster. Residue Arg-76 participates in GTP binding. Gly-80 is a binding site for S-adenosyl-L-methionine. Thr-107 serves as a coordination point for GTP. Position 131 (Ser-131) interacts with S-adenosyl-L-methionine. A GTP-binding site is contributed by Lys-168. S-adenosyl-L-methionine is bound at residue Met-202. Residues Cys-265 and Cys-268 each contribute to the [4Fe-4S] cluster site. 270 to 272 is a binding site for GTP; it reads RLR. Cys-282 contributes to the [4Fe-4S] cluster binding site.

Belongs to the radical SAM superfamily. MoaA family. Monomer and homodimer. [4Fe-4S] cluster is required as a cofactor.

The enzyme catalyses GTP + AH2 + S-adenosyl-L-methionine = (8S)-3',8-cyclo-7,8-dihydroguanosine 5'-triphosphate + 5'-deoxyadenosine + L-methionine + A + H(+). It functions in the pathway cofactor biosynthesis; molybdopterin biosynthesis. In terms of biological role, catalyzes the cyclization of GTP to (8S)-3',8-cyclo-7,8-dihydroguanosine 5'-triphosphate. This Haemophilus influenzae (strain 86-028NP) protein is GTP 3',8-cyclase.